The sequence spans 393 residues: Pre-mRNA-splicing regulator WTAP (393 aa).

Positions 240 to 393 (QQQIQTSGNR…SSVNVQGSVL (154 aa)) are disordered. A compositionally biased stretch (basic and acidic residues) spans 254–267 (ESKDEGETSGKDCG). Residues 272–286 (GPSNGGSSHQRTHSS) are compositionally biased toward polar residues. The segment covering 310 to 319 (LPNHSEERTS) has biased composition (basic and acidic residues). Polar residues predominate over residues 320 to 353 (RGGSSYMNQLSTGYESVDSPTGSENSLTHQSNDT). Basic and acidic residues predominate over residues 354-365 (DSNHDSQEEKPV). The span at 369-393 (GNRTVSSRHLQNGLDSSVNVQGSVL) shows a compositional bias: polar residues.

This sequence belongs to the fl(2)d family. As to quaternary structure, component of the WMM complex, a N6-methyltransferase complex composed of a catalytic subcomplex, named MAC, and of an associated subcomplex, named MACOM. Component of the MACOM subcomplex.

Its subcellular location is the nucleus speckle. The protein resides in the nucleus. The protein localises to the nucleoplasm. Functionally, associated component of the WMM complex, a complex that mediates N6-methyladenosine (m6A) methylation of RNAs, a modification that plays a role in the efficiency of mRNA splicing and RNA processing. The polypeptide is Pre-mRNA-splicing regulator WTAP (Xenopus tropicalis (Western clawed frog)).